The sequence spans 682 residues: Potassium-transporting ATPase ATP-binding subunit (682 aa).

Helical transmembrane passes span 34 to 54 (PVMF…LAMV), 58 to 78 (IAGS…TVLF), 219 to 239 (IALT…TATL), and 254 to 274 (VLVA…LSAI). The active-site 4-aspartylphosphate intermediate is D307. ATP-binding positions include D344, E348, 377–384 (FTAQSRMS), and K395. Mg(2+) contacts are provided by D518 and D522. 3 consecutive transmembrane segments (helical) span residues 588–608 (FAII…LNVM), 616–636 (AILS…PLAL), and 662–682 (LLVP…LGLA).

It belongs to the cation transport ATPase (P-type) (TC 3.A.3) family. Type IA subfamily. As to quaternary structure, the system is composed of three essential subunits: KdpA, KdpB and KdpC.

It is found in the cell inner membrane. It catalyses the reaction K(+)(out) + ATP + H2O = K(+)(in) + ADP + phosphate + H(+). Part of the high-affinity ATP-driven potassium transport (or Kdp) system, which catalyzes the hydrolysis of ATP coupled with the electrogenic transport of potassium into the cytoplasm. This subunit is responsible for energy coupling to the transport system and for the release of the potassium ions to the cytoplasm. This chain is Potassium-transporting ATPase ATP-binding subunit, found in Salmonella dublin (strain CT_02021853).